A 326-amino-acid chain; its full sequence is Phenylalanine--tRNA ligase alpha subunit (326 aa).

Mg(2+) is bound at residue glutamate 251.

Belongs to the class-II aminoacyl-tRNA synthetase family. Phe-tRNA synthetase alpha subunit type 1 subfamily. As to quaternary structure, tetramer of two alpha and two beta subunits. The cofactor is Mg(2+).

The protein localises to the cytoplasm. It catalyses the reaction tRNA(Phe) + L-phenylalanine + ATP = L-phenylalanyl-tRNA(Phe) + AMP + diphosphate + H(+). This chain is Phenylalanine--tRNA ligase alpha subunit, found in Idiomarina loihiensis (strain ATCC BAA-735 / DSM 15497 / L2-TR).